Reading from the N-terminus, the 1015-residue chain is DNA ligase 3 (1015 aa).

The PARP-type zinc-finger motif lies at F94–S186. Zn(2+) contacts are provided by C106, C109, H140, and C143. A phosphoserine mark is found at S211, S217, S228, and S244. Residues G229–K255 form a disordered region. Residues K234 to A253 are compositionally biased toward polar residues. 4 interaction with DNA regions span residues P279–N282, V323–D328, T393–D396, and K426–K432. E511 contacts ATP. Catalysis depends on K513, which acts as the N6-AMP-lysine intermediate. The ATP site is built by R518 and R533. Mg(2+) contacts are provided by E565 and E660. ATP is bound by residues K665, R676, and K680. The tract at residues D849–K926 is disordered. The segment covering T854–K884 has biased composition (low complexity). S919 is modified (phosphoserine). Positions V939 to C1015 constitute a BRCT domain.

It belongs to the ATP-dependent DNA ligase family. In terms of assembly, isoform 3 interacts (via BRCT domain) with the nuclear DNA-repair protein XRCC1. Interacts with POLG. Interacts with POLB. Mg(2+) is required as a cofactor. The alpha isoform is expressed in all tissues, while the beta isoform is expressed only in the testis.

The protein localises to the nucleus. The enzyme catalyses ATP + (deoxyribonucleotide)n-3'-hydroxyl + 5'-phospho-(deoxyribonucleotide)m = (deoxyribonucleotide)n+m + AMP + diphosphate.. In terms of biological role, the alpha isoform interacts with DNA-repair protein XRCC1 and can correct defective DNA strand-break repair and sister chromatid exchange following treatment with ionizing radiation and alkylating agents. The beta isoform does not interact with XRCC1 and may be specifically involved in the completion of homologous recombination events that occur during meiotic prophase. In Mus musculus (Mouse), this protein is DNA ligase 3 (Lig3).